The following is a 443-amino-acid chain: Trimethylamine monooxygenase (443 aa).

4 residues coordinate FAD: aspartate 37, glutamine 39, leucine 45, and tryptophan 46. NADP(+) contacts are provided by tryptophan 70 and asparagine 72. FAD contacts are provided by asparagine 72 and valine 125. Residues tyrosine 170, serine 202, serine 203, serine 205, and arginine 226 each coordinate NADP(+). FAD-binding residues include glutamine 315 and threonine 318. An NADP(+)-binding site is contributed by arginine 409.

This sequence belongs to the FMO family. It depends on FAD as a cofactor.

It catalyses the reaction trimethylamine + NADPH + O2 = trimethylamine N-oxide + NADP(+) + H2O. Functionally, catalyzes the oxidation of trimethylamine (TMA) to produce trimethylamine N-oxide (TMAO). In vitro, has a broad substrate specificity, oxidizing many nitrogen- and sulfur-containing compounds, including dimethylamine (DMA), dimethylsulfide (DMS) and dimethylsulfoxide (DMSO). The sequence is that of Trimethylamine monooxygenase from Pelagibacter ubique (strain HTCC1002).